A 249-amino-acid chain; its full sequence is Probable transcriptional regulatory protein ACIAD2052 (249 aa).

Belongs to the TACO1 family.

It localises to the cytoplasm. The sequence is that of Probable transcriptional regulatory protein ACIAD2052 from Acinetobacter baylyi (strain ATCC 33305 / BD413 / ADP1).